The sequence spans 121 residues: MNLYEHTIVARQDTSPAQVKQLTEKYSKIVEKNEGEIVQTEDWGLLNLAYIIKKNKKGIYMHFKIKGPGKIIDELEKNEAIDKNLLRYMTVKVKKFNLEAKYFSKKDEYEKKEYKKEYNRD.

It belongs to the bacterial ribosomal protein bS6 family.

Its function is as follows. Binds together with bS18 to 16S ribosomal RNA. The polypeptide is Small ribosomal subunit protein bS6 (Pelagibacter ubique (strain HTCC1062)).